The chain runs to 139 residues: ATP synthase epsilon chain (139 aa).

The protein belongs to the ATPase epsilon chain family. F-type ATPases have 2 components, CF(1) - the catalytic core - and CF(0) - the membrane proton channel. CF(1) has five subunits: alpha(3), beta(3), gamma(1), delta(1), epsilon(1). CF(0) has three main subunits: a, b and c.

It is found in the cell membrane. Produces ATP from ADP in the presence of a proton gradient across the membrane. This chain is ATP synthase epsilon chain, found in Levilactobacillus brevis (strain ATCC 367 / BCRC 12310 / CIP 105137 / JCM 1170 / LMG 11437 / NCIMB 947 / NCTC 947) (Lactobacillus brevis).